Reading from the N-terminus, the 172-residue chain is Macro domain-containing protein CT2219 (172 aa).

One can recognise a Macro domain in the interval methionine 1 to glycine 172.

Belongs to the MacroD-type family.

The sequence is that of Macro domain-containing protein CT2219 from Chlorobaculum tepidum (strain ATCC 49652 / DSM 12025 / NBRC 103806 / TLS) (Chlorobium tepidum).